The following is a 154-amino-acid chain: Ribosomal RNA large subunit methyltransferase H (154 aa).

S-adenosyl-L-methionine is bound at residue glycine 102.

It belongs to the RNA methyltransferase RlmH family. Homodimer.

The protein localises to the cytoplasm. The catalysed reaction is pseudouridine(1915) in 23S rRNA + S-adenosyl-L-methionine = N(3)-methylpseudouridine(1915) in 23S rRNA + S-adenosyl-L-homocysteine + H(+). Specifically methylates the pseudouridine at position 1915 (m3Psi1915) in 23S rRNA. This chain is Ribosomal RNA large subunit methyltransferase H, found in Caulobacter sp. (strain K31).